We begin with the raw amino-acid sequence, 146 residues long: Large ribosomal subunit protein bL21 (146 aa).

The segment covering 95-104 has biased composition (basic residues); sequence PKKKTRRKMG. Positions 95 to 146 are disordered; sequence PKKKTRRKMGHRQELTRVMVKSISISKSTPKSSPKTEATKKSTSSKASKPEN. Over residues 115 to 146 the composition is skewed to low complexity; that stretch reads KSISISKSTPKSSPKTEATKKSTSSKASKPEN.

Belongs to the bacterial ribosomal protein bL21 family. As to quaternary structure, part of the 50S ribosomal subunit. Contacts protein L20.

In terms of biological role, this protein binds to 23S rRNA in the presence of protein L20. The sequence is that of Large ribosomal subunit protein bL21 from Prochlorococcus marinus (strain MIT 9515).